The sequence spans 874 residues: Alanine--tRNA ligase (874 aa).

Zn(2+) contacts are provided by H564, H568, C665, and H669.

It belongs to the class-II aminoacyl-tRNA synthetase family. Zn(2+) is required as a cofactor.

The protein resides in the cytoplasm. The catalysed reaction is tRNA(Ala) + L-alanine + ATP = L-alanyl-tRNA(Ala) + AMP + diphosphate. In terms of biological role, catalyzes the attachment of alanine to tRNA(Ala) in a two-step reaction: alanine is first activated by ATP to form Ala-AMP and then transferred to the acceptor end of tRNA(Ala). Also edits incorrectly charged Ser-tRNA(Ala) and Gly-tRNA(Ala) via its editing domain. In Polaromonas naphthalenivorans (strain CJ2), this protein is Alanine--tRNA ligase.